A 325-amino-acid polypeptide reads, in one-letter code: Putative gluconeogenesis factor (325 aa).

The protein belongs to the gluconeogenesis factor family.

It localises to the cytoplasm. In terms of biological role, required for morphogenesis under gluconeogenic growth conditions. The polypeptide is Putative gluconeogenesis factor (Streptococcus pyogenes serotype M3 (strain ATCC BAA-595 / MGAS315)).